The primary structure comprises 440 residues: Nuclear fusion protein BIK1 (440 aa).

Residues 26-69 (GPVDTKAGMFAGVDLLANIGKNDGSFMGKKYFQTEYPQSGLFIQ) form the CAP-Gly domain. Residues Ser-95 and Ser-110 each carry the phosphoserine modification. Residues 108 to 157 (QFSPMDDPKSPTPMRSFRITSRHSGNQQSMDQEASDHHQQQEFGYDNRED) are disordered. A compositionally biased stretch (polar residues) spans 125–139 (RITSRHSGNQQSMDQ). Residues 141-157 (ASDHHQQQEFGYDNRED) are compositionally biased toward basic and acidic residues. Residues 190-397 (NSSEVTIELR…AQAQTAVESL (208 aa)) are a coiled coil. The CCHC-box signature appears at 416 to 429 (CEHCDTMGHNTAEC).

It is found in the cytoplasm. The protein localises to the cytoskeleton. The protein resides in the microtubule organizing center. It localises to the spindle pole body. Its subcellular location is the spindle. Functionally, required for nuclear fusion, chromosome disjunction, and nuclear segregation during mitosis. Probably required for the formation or stabilization of microtubules during mitosis and for spindle pole body fusion during conjugation. The chain is Nuclear fusion protein BIK1 (BIK1) from Saccharomyces cerevisiae (strain ATCC 204508 / S288c) (Baker's yeast).